The following is a 173-amino-acid chain: Peptide methionine sulfoxide reductase MsrA (173 aa).

Cys-10 is an active-site residue.

This sequence belongs to the MsrA Met sulfoxide reductase family.

It catalyses the reaction L-methionyl-[protein] + [thioredoxin]-disulfide + H2O = L-methionyl-(S)-S-oxide-[protein] + [thioredoxin]-dithiol. The enzyme catalyses [thioredoxin]-disulfide + L-methionine + H2O = L-methionine (S)-S-oxide + [thioredoxin]-dithiol. Has an important function as a repair enzyme for proteins that have been inactivated by oxidation. Catalyzes the reversible oxidation-reduction of methionine sulfoxide in proteins to methionine. The sequence is that of Peptide methionine sulfoxide reductase MsrA from Acinetobacter baumannii (strain AB307-0294).